Here is a 300-residue protein sequence, read N- to C-terminus: tRNA pseudouridine synthase B (300 aa).

The active-site Nucleophile is the Asp38.

Belongs to the pseudouridine synthase TruB family. Type 1 subfamily.

The catalysed reaction is uridine(55) in tRNA = pseudouridine(55) in tRNA. Its function is as follows. Responsible for synthesis of pseudouridine from uracil-55 in the psi GC loop of transfer RNAs. The chain is tRNA pseudouridine synthase B from Dehalococcoides mccartyi (strain CBDB1).